Reading from the N-terminus, the 563-residue chain is Urocanate hydratase (563 aa).

Residues 53 to 54, Gln-131, 177 to 179, Glu-197, Arg-202, 243 to 244, 264 to 268, 274 to 275, and Tyr-323 contribute to the NAD(+) site; these read GG, GMG, NA, QTSAH, and YL. The active site involves Cys-411. Residue Gly-493 coordinates NAD(+).

It belongs to the urocanase family. Requires NAD(+) as cofactor.

Its subcellular location is the cytoplasm. The enzyme catalyses 4-imidazolone-5-propanoate = trans-urocanate + H2O. It functions in the pathway amino-acid degradation; L-histidine degradation into L-glutamate; N-formimidoyl-L-glutamate from L-histidine: step 2/3. Its function is as follows. Catalyzes the conversion of urocanate to 4-imidazolone-5-propionate. The protein is Urocanate hydratase of Yersinia pestis bv. Antiqua (strain Antiqua).